The sequence spans 250 residues: tRNA (guanine-N(1)-)-methyltransferase (250 aa).

S-adenosyl-L-methionine is bound by residues Gly116 and 136 to 141; that span reads IGDYVL.

This sequence belongs to the RNA methyltransferase TrmD family. Homodimer.

The protein resides in the cytoplasm. It catalyses the reaction guanosine(37) in tRNA + S-adenosyl-L-methionine = N(1)-methylguanosine(37) in tRNA + S-adenosyl-L-homocysteine + H(+). Specifically methylates guanosine-37 in various tRNAs. The polypeptide is tRNA (guanine-N(1)-)-methyltransferase (Pseudomonas putida (strain GB-1)).